The sequence spans 530 residues: Histone-arginine methyltransferase CARMER (530 aa).

Positions 141–450 (ASQYFQFYGY…QSYDVTIDLH (310 aa)) constitute an SAM-dependent MTase PRMT-type domain. Residues glutamine 154, arginine 163, glycine 187, glutamate 209, glutamate 238, and threonine 266 each coordinate S-adenosyl-L-methionine. Arginine 501 carries the post-translational modification Asymmetric dimethylarginine; by autocatalysis.

It belongs to the class I-like SAM-binding methyltransferase superfamily. Protein arginine N-methyltransferase family. Homodimer. Post-translationally, the dimethylated protein is the major form.

Its subcellular location is the cytoplasm. It localises to the nucleus. The enzyme catalyses L-arginyl-[protein] + 2 S-adenosyl-L-methionine = N(omega),N(omega)-dimethyl-L-arginyl-[protein] + 2 S-adenosyl-L-homocysteine + 2 H(+). Functionally, methylates (mono- and asymmetric dimethylation) the guanidino nitrogens of arginyl residues in proteins. May methylate histone H3 at 'Arg-17' and activate transcription via chromatin remodeling. The polypeptide is Histone-arginine methyltransferase CARMER (Art4) (Drosophila simulans (Fruit fly)).